Reading from the N-terminus, the 27-residue chain is uncharacterized protein (27 aa).

It is found in the plastid. The protein localises to the cyanelle. This is an uncharacterized protein from Cyanophora paradoxa.